Here is a 517-residue protein sequence, read N- to C-terminus: Serine O-succinyltransferase (517 aa).

The transit peptide at 1-46 (MSPLNGVARSLPRPFQAVARRPFRVAQPAVACPSNRRSFNHSRSLR) directs the protein to the mitochondrion. Positions 34–66 (SNRRSFNHSRSLRSTGSQSPAPSPRDSSNPALS) are disordered. Residues 45–64 (LRSTGSQSPAPSPRDSSNPA) are compositionally biased toward polar residues. The region spanning 134–386 (NVILLHTGLS…LTQQLATKKQ (253 aa)) is the AB hydrolase-1 domain. The important for substrate specificity stretch occupies residues 141 to 144 (GLSA). The active-site Nucleophile is the serine 238. Residue arginine 307 participates in substrate binding. A disordered region spans residues 413-436 (QPYQEQPSASTSAEQSASASETGS). Over residues 416 to 436 (QEQPSASTSAEQSASASETGS) the composition is skewed to low complexity. Residues aspartate 461 and histidine 498 contribute to the active site. Aspartate 499 serves as a coordination point for substrate.

Belongs to the AB hydrolase superfamily. MetX family.

It is found in the mitochondrion. The catalysed reaction is succinyl-CoA + L-serine = O-succinyl-L-serine + CoA. The protein operates within amino-acid biosynthesis; L-cysteine biosynthesis; L-cysteine from L-serine: step 1/2. Transfers a succinyl group from succinyl-CoA to L-serine, forming succinyl-L-serine. Also has weak serine acetyl transferase activity and homoserine succinyl transferase activity. The protein is Serine O-succinyltransferase of Emericella nidulans (Aspergillus nidulans).